The sequence spans 190 residues: Small ribosomal subunit protein eS7A (190 aa).

The residue at position 2 (Ser2) is an N-acetylserine. Residues Lys83, Lys84, and Lys124 each participate in a glycyl lysine isopeptide (Lys-Gly) (interchain with G-Cter in ubiquitin) cross-link.

The protein belongs to the eukaryotic ribosomal protein eS7 family. Component of the small ribosomal subunit (SSU). Mature yeast ribosomes consist of a small (40S) and a large (60S) subunit. The 40S small subunit contains 1 molecule of ribosomal RNA (18S rRNA) and 33 different proteins (encoded by 57 genes). The large 60S subunit contains 3 rRNA molecules (25S, 5.8S and 5S rRNA) and 46 different proteins (encoded by 81 genes). Interacts with snoRNA U3. uS11 interacts with MPP10. Component of the ribosomal small subunit (SSU) processome composed of at least 40 protein subunits and snoRNA U3. Post-translationally, N-terminally acetylated by acetyltransferase NatA. In terms of processing, ubiquitinated at Lys-83 and Lys-84 in response to stalled ribosomes, leading to activation of the No-Go Decay (NGD) pathway: first monoubiquitinated by MOT2/NOT4, followed by formation by HEL2 of 'Lys-63'-linked polyubiquitin chains on monoubiquitin.

The protein localises to the cytoplasm. Its subcellular location is the nucleus. It localises to the nucleolus. Component of the ribosome, a large ribonucleoprotein complex responsible for the synthesis of proteins in the cell. The small ribosomal subunit (SSU) binds messenger RNAs (mRNAs) and translates the encoded message by selecting cognate aminoacyl-transfer RNA (tRNA) molecules. The large subunit (LSU) contains the ribosomal catalytic site termed the peptidyl transferase center (PTC), which catalyzes the formation of peptide bonds, thereby polymerizing the amino acids delivered by tRNAs into a polypeptide chain. The nascent polypeptides leave the ribosome through a tunnel in the LSU and interact with protein factors that function in enzymatic processing, targeting, and the membrane insertion of nascent chains at the exit of the ribosomal tunnel. eS7 is involved in nucleolar processing of pre-18S ribosomal RNA and ribosome assembly. The protein is Small ribosomal subunit protein eS7A of Saccharomyces cerevisiae (strain ATCC 204508 / S288c) (Baker's yeast).